We begin with the raw amino-acid sequence, 453 residues long: Cysteine--tRNA ligase (453 aa).

Residue cysteine 31 coordinates Zn(2+). The short motif at 33-43 (PTVYDNPHIGN) is the 'HIGH' region element. Zn(2+)-binding residues include cysteine 213, histidine 238, and glutamate 242. The 'KMSKS' region signature appears at 271–275 (KMAKS). Lysine 274 contributes to the ATP binding site.

The protein belongs to the class-I aminoacyl-tRNA synthetase family. As to quaternary structure, monomer. Zn(2+) serves as cofactor.

It localises to the cytoplasm. The enzyme catalyses tRNA(Cys) + L-cysteine + ATP = L-cysteinyl-tRNA(Cys) + AMP + diphosphate. The chain is Cysteine--tRNA ligase from Pelagibacter ubique (strain HTCC1062).